Reading from the N-terminus, the 81-residue chain is Large ribosomal subunit protein bL27 (81 aa).

The disordered stretch occupies residues 1–22 (MAHKKGQGSSRNGRDSNAQRRG).

The protein belongs to the bacterial ribosomal protein bL27 family.

This chain is Large ribosomal subunit protein bL27, found in Rhodopirellula baltica (strain DSM 10527 / NCIMB 13988 / SH1).